Consider the following 179-residue polypeptide: Putative ankyrin repeat protein RF_0922 (179 aa).

ANK repeat units lie at residues Lys5 to Ile34, Asn40 to Val72, Asn75 to Ile104, Asn110 to Ile139, and Asn145 to Ile174.

This chain is Putative ankyrin repeat protein RF_0922, found in Rickettsia felis (strain ATCC VR-1525 / URRWXCal2) (Rickettsia azadi).